Consider the following 755-residue polypeptide: Photosystem I P700 chlorophyll a apoprotein A1 (755 aa).

A run of 8 helical transmembrane segments spans residues 72 to 95 (IFSA…YHGA), 158 to 181 (LLCT…FHYH), 197 to 221 (LNHH…HVAI), 297 to 315 (QAHH…GHMY), 352 to 375 (WHAQ…QHMY), 391 to 417 (ISLF…IYMV), 439 to 461 (AIIS…FYVH), and 536 to 554 (FMVH…LILL). [4Fe-4S] cluster contacts are provided by Cys-578 and Cys-587. The next 2 membrane-spanning stretches (helical) occupy residues 594 to 615 (HVFL…HFSW) and 669 to 691 (LSAY…MFLF). His-680 is a binding site for chlorophyll a'. Met-688 and Tyr-696 together coordinate chlorophyll a. Trp-697 contributes to the phylloquinone binding site. The helical transmembrane segment at 729–749 (AVGVAHYLLGGIVTTWAFFLA) threads the bilayer.

It belongs to the PsaA/PsaB family. In terms of assembly, the PsaA/B heterodimer binds the P700 chlorophyll special pair and subsequent electron acceptors. PSI consists of a core antenna complex that captures photons, and an electron transfer chain that converts photonic excitation into a charge separation. The cyanobacterial PSI reaction center is composed of one copy each of PsaA,B,C,D,E,F,I,J,K,L,M and X, and forms trimeric complexes. PSI electron transfer chain: 5 chlorophyll a, 1 chlorophyll a', 2 phylloquinones and 3 4Fe-4S clusters. PSI core antenna: 90 chlorophyll a, 22 carotenoids, 3 phospholipids and 1 galactolipid. P700 is a chlorophyll a/chlorophyll a' dimer, A0 is one or more chlorophyll a, A1 is one or both phylloquinones and FX is a shared 4Fe-4S iron-sulfur center. serves as cofactor.

Its subcellular location is the cellular thylakoid membrane. It carries out the reaction reduced [plastocyanin] + hnu + oxidized [2Fe-2S]-[ferredoxin] = oxidized [plastocyanin] + reduced [2Fe-2S]-[ferredoxin]. PsaA and PsaB bind P700, the primary electron donor of photosystem I (PSI), as well as the electron acceptors A0, A1 and FX. PSI is a plastocyanin/cytochrome c6-ferredoxin oxidoreductase, converting photonic excitation into a charge separation, which transfers an electron from the donor P700 chlorophyll pair to the spectroscopically characterized acceptors A0, A1, FX, FA and FB in turn. Oxidized P700 is reduced on the lumenal side of the thylakoid membrane by plastocyanin or cytochrome c6. This Synechococcus sp. (strain JA-3-3Ab) (Cyanobacteria bacterium Yellowstone A-Prime) protein is Photosystem I P700 chlorophyll a apoprotein A1.